The following is a 342-amino-acid chain: Biotin synthase (342 aa).

Residues asparagine 36 to serine 260 enclose the Radical SAM core domain. Residues cysteine 51, cysteine 55, and cysteine 58 each contribute to the [4Fe-4S] cluster site. 4 residues coordinate [2Fe-2S] cluster: cysteine 95, cysteine 126, cysteine 186, and arginine 258.

It belongs to the radical SAM superfamily. Biotin synthase family. Homodimer. [4Fe-4S] cluster is required as a cofactor. The cofactor is [2Fe-2S] cluster.

It catalyses the reaction (4R,5S)-dethiobiotin + (sulfur carrier)-SH + 2 reduced [2Fe-2S]-[ferredoxin] + 2 S-adenosyl-L-methionine = (sulfur carrier)-H + biotin + 2 5'-deoxyadenosine + 2 L-methionine + 2 oxidized [2Fe-2S]-[ferredoxin]. Its pathway is cofactor biosynthesis; biotin biosynthesis; biotin from 7,8-diaminononanoate: step 2/2. Its function is as follows. Catalyzes the conversion of dethiobiotin (DTB) to biotin by the insertion of a sulfur atom into dethiobiotin via a radical-based mechanism. The chain is Biotin synthase from Buchnera aphidicola subsp. Schizaphis graminum (strain Sg).